Consider the following 461-residue polypeptide: MGTIHLFRKPQRSFFGKLLQEFRLVAADRRSWKILLFGAINLTCTGFLLMWCSSTNSIALTAYTYLTIFDLFSLITCLVSYWVMMRKPSPAYSFGFERLEVLAVFASTVLAQLGALFILKESAERFLEQPEIHTGRLLVGTFVALSFNLFTMLSIRNKPFAYVSEAASTSWLQEHVADLSRSLCGIIPGLSSIFLPRMNPFVLIDLAGAFALCITYMLIEINNYFAVDTASAIAIALMTFGTMYPMSVYSGKVLLQTTPPHVIGQLDKLIREVSTLDGVLEVRNEHFWTLGFGSLAGSVHVRIRRDANEQMVLAHVTNRLYTLVSTLTVQIFKDDWIRPALLSGPVAANVLNFTDHHVIPMPPLKGTDDSNPVTSTPTKPSSPPPEFSFNTPGKNVSPVILLNTQTRPYGLGLNHGHAPYSSVLNQGLGVPGIGATQGFRTGFTNIPSRYGTNNRIGQPRP.

At 1 to 33 (MGTIHLFRKPQRSFFGKLLQEFRLVAADRRSWK) the chain is on the cytoplasmic side. The helical transmembrane segment at 34–54 (ILLFGAINLTCTGFLLMWCSS) threads the bilayer. Residues 55-64 (TNSIALTAYT) lie on the Extracellular side of the membrane. The chain crosses the membrane as a helical span at residues 65–85 (YLTIFDLFSLITCLVSYWVMM). The Cytoplasmic portion of the chain corresponds to 86-98 (RKPSPAYSFGFER). A helical transmembrane segment spans residues 99–119 (LEVLAVFASTVLAQLGALFIL). Over 120–134 (KESAERFLEQPEIHT) the chain is Extracellular. A helical membrane pass occupies residues 135 to 155 (GRLLVGTFVALSFNLFTMLSI). The Cytoplasmic portion of the chain corresponds to 156-200 (RNKPFAYVSEAASTSWLQEHVADLSRSLCGIIPGLSSIFLPRMNP). Residues 201–221 (FVLIDLAGAFALCITYMLIEI) form a helical membrane-spanning segment. Residues 222–223 (NN) lie on the Extracellular side of the membrane. A helical membrane pass occupies residues 224 to 244 (YFAVDTASAIAIALMTFGTMY). At 245 to 461 (PMSVYSGKVL…TNNRIGQPRP (217 aa)) the chain is on the cytoplasmic side. Residues 362-393 (PPLKGTDDSNPVTSTPTKPSSPPPEFSFNTPG) form a disordered region. The segment covering 370–379 (SNPVTSTPTK) has biased composition (low complexity).

Belongs to the cation diffusion facilitator (CDF) transporter (TC 2.A.4) family. SLC30A subfamily. Heterodimer with SLC30A5; form a functional zinc ion transmembrane transporter.

The protein resides in the golgi apparatus. The protein localises to the trans-Golgi network membrane. Its function is as follows. Has probably no intrinsic transporter activity but together with SLC30A5 forms a functional zinc ion:proton antiporter heterodimer, mediating zinc entry into the lumen of organelles along the secretory pathway. As part of that zinc ion:proton antiporter, contributes to zinc ion homeostasis within the early secretory pathway and regulates the activation and folding of enzymes like alkaline phosphatases and enzymes involved in phosphatidylinositol glycan anchor biosynthesis. This chain is Zinc transporter 6 (SLC30A6), found in Bos taurus (Bovine).